Here is a 542-residue protein sequence, read N- to C-terminus: Calcium-dependent protein kinase 7 (542 aa).

Glycine 2 is lipidated: N-myristoyl glycine. A Protein kinase domain is found at tyrosine 79–isoleucine 337. ATP contacts are provided by residues leucine 85–threonine 93 and lysine 108. The active-site Proton acceptor is aspartate 203. Residues alanine 343–isoleucine 373 are autoinhibitory domain. The EF-hand 1 domain maps to glutamate 380–glutamate 415. 16 residues coordinate Ca(2+): aspartate 393, glutamate 404, aspartate 431, asparagine 433, threonine 435, glutamate 440, aspartate 465, aspartate 467, serine 469, tyrosine 471, lysine 476, aspartate 499, asparagine 501, aspartate 503, glutamine 505, and glutamate 510. The region spanning phenylalanine 416 to isoleucine 451 is the EF-hand 2; degenerate domain. EF-hand domains lie at glutamate 452–glutamate 487 and aspartate 488–glycine 521.

This sequence belongs to the protein kinase superfamily. Ser/Thr protein kinase family. CDPK subfamily. In terms of tissue distribution, expressed in roots. Expressed in leaf sheaths.

It is found in the membrane. The protein localises to the cytoplasm. It localises to the cytosol. It carries out the reaction L-seryl-[protein] + ATP = O-phospho-L-seryl-[protein] + ADP + H(+). The enzyme catalyses L-threonyl-[protein] + ATP = O-phospho-L-threonyl-[protein] + ADP + H(+). Activated by calcium. Autophosphorylation may play an important role in the regulation of the kinase activity. In terms of biological role, may play a role in signal transduction pathways that involve calcium as a second messenger. May be a signaling component in the response to gibberellin and cold stress. The protein is Calcium-dependent protein kinase 7 of Oryza sativa subsp. japonica (Rice).